A 142-amino-acid chain; its full sequence is HTH-type transcriptional regulator MntR (142 aa).

Residues 1 to 63 form the HTH dtxR-type domain; the sequence is MPTPSMEDYI…YEKYRGLILT (63 aa). Mn(2+) is bound by residues D8, E11, H77, E99, E102, and H103.

It belongs to the DtxR/MntR family. In terms of assembly, homodimer.

The protein resides in the cytoplasm. Its activity is regulated as follows. DNA binding is strongly activated by Mn(2+). Central regulator of manganese homeostasis. The sequence is that of HTH-type transcriptional regulator MntR from Listeria monocytogenes serotype 4b (strain CLIP80459).